Here is a 406-residue protein sequence, read N- to C-terminus: Protein translocase subunit SecD (406 aa).

6 helical membrane passes run 8-28 (IVIL…NPIN), 240-260 (MAAM…YRVA), 262-282 (FVAD…MCAI), 289-309 (PGIA…VIIF), 334-354 (FPAI…LFFF), and 361-381 (GFAV…IFIT).

It belongs to the SecD/SecF family. SecD subfamily. In terms of assembly, forms a complex with SecF. Part of the essential Sec protein translocation apparatus which comprises SecA, SecYEG and auxiliary proteins SecDF. Other proteins may also be involved.

The protein resides in the cell inner membrane. Its function is as follows. Part of the Sec protein translocase complex. Interacts with the SecYEG preprotein conducting channel. SecDF uses the proton motive force (PMF) to complete protein translocation after the ATP-dependent function of SecA. The chain is Protein translocase subunit SecD from Sebaldella termitidis (strain ATCC 33386 / NCTC 11300).